The sequence spans 296 residues: MAMVQPKSQKARLFITHLLLLLFIAAIMFPLLMVVAISLRQGNFATGSLIPEQISWDHWKLALGFSVEQADGRITPPPFPVLLWLWNSVKVAGISAIGIVALSTTCAYAFARMRFPGKATLLKGMLIFQMFPAVLSLVALYALFDRLGEYIPFIGLNTHGGVIFAYLGGIALHVWTIKGYFETIDSSLEEAAALDGATPWQAFRLVLLPLSVPILAVVFILSFIAAITEVPVASLLLRDVNSYTLAVGMQQYLNPQNYLWGDFAAAAVMSALPITIVFLLAQRWLVNGLTAGGVKG.

The Cytoplasmic segment spans residues 1-12 (MAMVQPKSQKAR). The helical transmembrane segment at 13 to 35 (LFITHLLLLLFIAAIMFPLLMVV) threads the bilayer. The Periplasmic segment spans residues 36–88 (AISLRQGNFATGSLIPEQISWDHWKLALGFSVEQADGRITPPPFPVLLWLWNS). The ABC transmembrane type-1 domain occupies 85-281 (LWNSVKVAGI…LPITIVFLLA (197 aa)). A helical transmembrane segment spans residues 89-111 (VKVAGISAIGIVALSTTCAYAFA). The Cytoplasmic portion of the chain corresponds to 112-123 (RMRFPGKATLLK). Residues 124-143 (GMLIFQMFPAVLSLVALYAL) form a helical membrane-spanning segment. At 144–152 (FDRLGEYIP) the chain is on the periplasmic side. A helical transmembrane segment spans residues 153 to 175 (FIGLNTHGGVIFAYLGGIALHVW). Residues 176-204 (TIKGYFETIDSSLEEAAALDGATPWQAFR) are Cytoplasmic-facing. A helical transmembrane segment spans residues 205-227 (LVLLPLSVPILAVVFILSFIAAI). The Periplasmic portion of the chain corresponds to 228-257 (TEVPVASLLLRDVNSYTLAVGMQQYLNPQN). The chain crosses the membrane as a helical span at residues 258–280 (YLWGDFAAAAVMSALPITIVFLL). The Cytoplasmic segment spans residues 281–296 (AQRWLVNGLTAGGVKG).

Belongs to the binding-protein-dependent transport system permease family. MalFG subfamily. The complex is composed of two ATP-binding proteins (MalK), two transmembrane proteins (MalG and MalF) and a solute-binding protein (MalE).

The protein resides in the cell inner membrane. Part of the ABC transporter complex MalEFGK involved in maltose/maltodextrin import. Probably responsible for the translocation of the substrate across the membrane. The sequence is that of Maltose/maltodextrin transport system permease protein MalG (malG) from Escherichia coli O157:H7.